A 459-amino-acid chain; its full sequence is ATP synthase subunit beta (459 aa).

148–155 contacts ATP; that stretch reads GGAGVGKT.

Belongs to the ATPase alpha/beta chains family. In terms of assembly, F-type ATPases have 2 components, CF(1) - the catalytic core - and CF(0) - the membrane proton channel. CF(1) has five subunits: alpha(3), beta(3), gamma(1), delta(1), epsilon(1). CF(0) has three main subunits: a(1), b(2) and c(9-12). The alpha and beta chains form an alternating ring which encloses part of the gamma chain. CF(1) is attached to CF(0) by a central stalk formed by the gamma and epsilon chains, while a peripheral stalk is formed by the delta and b chains.

Its subcellular location is the cell inner membrane. The catalysed reaction is ATP + H2O + 4 H(+)(in) = ADP + phosphate + 5 H(+)(out). Produces ATP from ADP in the presence of a proton gradient across the membrane. The catalytic sites are hosted primarily by the beta subunits. This is ATP synthase subunit beta from Hahella chejuensis (strain KCTC 2396).